The following is a 274-amino-acid chain: Large ribosomal subunit protein uL2cz/uL2cy (274 aa).

2 disordered regions span residues 1–25 (MAIH…VKSN) and 224–274 (NPVD…RRSK).

The protein belongs to the universal ribosomal protein uL2 family. In terms of assembly, part of the 50S ribosomal subunit.

It localises to the plastid. The protein resides in the chloroplast. The sequence is that of Large ribosomal subunit protein uL2cz/uL2cy (rpl2-A) from Cucumis sativus (Cucumber).